The sequence spans 159 residues: Large ribosomal subunit protein uL15 (159 aa).

The tract at residues 14 to 44 (ASRKRVGRGRATGWGCTSGRGNKGQNSRAGA) is disordered. Gly residues predominate over residues 23 to 35 (RATGWGCTSGRGN).

This sequence belongs to the universal ribosomal protein uL15 family. As to quaternary structure, part of the 50S ribosomal subunit.

Its function is as follows. Binds to the 23S rRNA. This Solidesulfovibrio magneticus (strain ATCC 700980 / DSM 13731 / RS-1) (Desulfovibrio magneticus) protein is Large ribosomal subunit protein uL15.